A 473-amino-acid chain; its full sequence is tRNA-2-methylthio-N(6)-dimethylallyladenosine synthase (473 aa).

The 121-residue stretch at 5 to 125 (RKLHIKSYGC…LPQLLARAKA (121 aa)) folds into the MTTase N-terminal domain. [4Fe-4S] cluster contacts are provided by Cys-14, Cys-50, Cys-88, Cys-166, Cys-170, and Cys-173. The 233-residue stretch at 152–384 (RARGISAFVT…QNLIDSQQSA (233 aa)) folds into the Radical SAM core domain. The TRAM domain occupies 387–449 (RAAVGTTVDV…RYSLLGSLAS (63 aa)). Positions 453–462 (SRASADDAPP) are enriched in low complexity. Residues 453–473 (SRASADDAPPVGASSPAIMGV) form a disordered region.

This sequence belongs to the methylthiotransferase family. MiaB subfamily. As to quaternary structure, monomer. It depends on [4Fe-4S] cluster as a cofactor.

The protein localises to the cytoplasm. It carries out the reaction N(6)-dimethylallyladenosine(37) in tRNA + (sulfur carrier)-SH + AH2 + 2 S-adenosyl-L-methionine = 2-methylsulfanyl-N(6)-dimethylallyladenosine(37) in tRNA + (sulfur carrier)-H + 5'-deoxyadenosine + L-methionine + A + S-adenosyl-L-homocysteine + 2 H(+). Catalyzes the methylthiolation of N6-(dimethylallyl)adenosine (i(6)A), leading to the formation of 2-methylthio-N6-(dimethylallyl)adenosine (ms(2)i(6)A) at position 37 in tRNAs that read codons beginning with uridine. This is tRNA-2-methylthio-N(6)-dimethylallyladenosine synthase from Nitrobacter hamburgensis (strain DSM 10229 / NCIMB 13809 / X14).